The sequence spans 611 residues: Actin-binding LIM protein 2 (611 aa).

LIM zinc-binding domains are found at residues 22-81, 81-141, 151-210, and 210-270; these read ILCN…LYGT, TRCF…VSVG, RSCG…KFGI, and IRCD…ARTE. Zn(2+) contacts are provided by C83, C86, H103, C106, C109, C112, C131, and C134. 8 residues coordinate Zn(2+): C212, C215, H232, C235, C238, C241, H260, and C263. Basic and acidic residues predominate over residues 269 to 278; it reads TEDRNKETRT. Disordered regions lie at residues 269 to 295 and 336 to 527; these read TEDR…SGSP and YISH…DQRN. Low complexity-rich tracts occupy residues 279 to 295 and 363 to 372; these read SSES…SGSP and SSPSSTGSVS. Phosphoserine is present on residues S282, S294, S364, and S367. A compositionally biased stretch (polar residues) spans 393 to 404; the sequence is SGRSTPSLSVLS. The residue at position 452 (S452) is a Phosphoserine. A Phosphothreonine modification is found at T472. Polar residues predominate over residues 473-488; the sequence is RTNSPDLDTQSLSHSS. Phosphoserine occurs at positions 476 and 578. The HP domain maps to 543–611; it reads MREYKIYPYD…NDLKKKALLF (69 aa).

In terms of assembly, interacts with F-actin and ABRA. Highly expressed in skeletal muscle.

The protein resides in the cytoplasm. May act as scaffold protein. May stimulate ABRA activity and ABRA-dependent SRF transcriptional activity. This chain is Actin-binding LIM protein 2 (ABLIM2), found in Homo sapiens (Human).